The chain runs to 502 residues: Maturase K (502 aa).

This sequence belongs to the intron maturase 2 family. MatK subfamily.

The protein resides in the plastid. Its subcellular location is the chloroplast. Usually encoded in the trnK tRNA gene intron. Probably assists in splicing its own and other chloroplast group II introns. This Tilia americana (American basswood) protein is Maturase K.